A 690-amino-acid polypeptide reads, in one-letter code: Elongation factor G (690 aa).

The region spanning 8-283 is the tr-type G domain; sequence SRCRNIGIMA…AVVDFLPSPS (276 aa). GTP-binding positions include 17–24, 81–85, and 135–138; these read AHIDAGKT, DTPGH, and NKMD.

This sequence belongs to the TRAFAC class translation factor GTPase superfamily. Classic translation factor GTPase family. EF-G/EF-2 subfamily.

Its subcellular location is the cytoplasm. Its function is as follows. Catalyzes the GTP-dependent ribosomal translocation step during translation elongation. During this step, the ribosome changes from the pre-translocational (PRE) to the post-translocational (POST) state as the newly formed A-site-bound peptidyl-tRNA and P-site-bound deacylated tRNA move to the P and E sites, respectively. Catalyzes the coordinated movement of the two tRNA molecules, the mRNA and conformational changes in the ribosome. The polypeptide is Elongation factor G (Anaplasma marginale (strain Florida)).